A 155-amino-acid polypeptide reads, in one-letter code: Regulatory protein RecX (155 aa).

The protein belongs to the RecX family.

The protein resides in the cytoplasm. In terms of biological role, modulates RecA activity. The protein is Regulatory protein RecX of Pseudomonas entomophila (strain L48).